Reading from the N-terminus, the 376-residue chain is UDP-N-acetylglucosamine--N-acetylmuramyl-(pentapeptide) pyrophosphoryl-undecaprenol N-acetylglucosamine transferase (376 aa).

Residues 12–14 (TAG), asparagine 126, arginine 163, serine 198, and glutamine 296 contribute to the UDP-N-acetyl-alpha-D-glucosamine site.

Belongs to the glycosyltransferase 28 family. MurG subfamily.

The protein resides in the cell membrane. The enzyme catalyses di-trans,octa-cis-undecaprenyl diphospho-N-acetyl-alpha-D-muramoyl-L-alanyl-D-glutamyl-meso-2,6-diaminopimeloyl-D-alanyl-D-alanine + UDP-N-acetyl-alpha-D-glucosamine = di-trans,octa-cis-undecaprenyl diphospho-[N-acetyl-alpha-D-glucosaminyl-(1-&gt;4)]-N-acetyl-alpha-D-muramoyl-L-alanyl-D-glutamyl-meso-2,6-diaminopimeloyl-D-alanyl-D-alanine + UDP + H(+). It participates in cell wall biogenesis; peptidoglycan biosynthesis. Its function is as follows. Cell wall formation. Catalyzes the transfer of a GlcNAc subunit on undecaprenyl-pyrophosphoryl-MurNAc-pentapeptide (lipid intermediate I) to form undecaprenyl-pyrophosphoryl-MurNAc-(pentapeptide)GlcNAc (lipid intermediate II). This is UDP-N-acetylglucosamine--N-acetylmuramyl-(pentapeptide) pyrophosphoryl-undecaprenol N-acetylglucosamine transferase from Frankia casuarinae (strain DSM 45818 / CECT 9043 / HFP020203 / CcI3).